A 95-amino-acid polypeptide reads, in one-letter code: Aspartyl/glutamyl-tRNA(Asn/Gln) amidotransferase subunit C (95 aa).

Belongs to the GatC family. As to quaternary structure, heterotrimer of A, B and C subunits.

The catalysed reaction is L-glutamyl-tRNA(Gln) + L-glutamine + ATP + H2O = L-glutaminyl-tRNA(Gln) + L-glutamate + ADP + phosphate + H(+). It catalyses the reaction L-aspartyl-tRNA(Asn) + L-glutamine + ATP + H2O = L-asparaginyl-tRNA(Asn) + L-glutamate + ADP + phosphate + 2 H(+). Allows the formation of correctly charged Asn-tRNA(Asn) or Gln-tRNA(Gln) through the transamidation of misacylated Asp-tRNA(Asn) or Glu-tRNA(Gln) in organisms which lack either or both of asparaginyl-tRNA or glutaminyl-tRNA synthetases. The reaction takes place in the presence of glutamine and ATP through an activated phospho-Asp-tRNA(Asn) or phospho-Glu-tRNA(Gln). The chain is Aspartyl/glutamyl-tRNA(Asn/Gln) amidotransferase subunit C from Gluconobacter oxydans (strain 621H) (Gluconobacter suboxydans).